Consider the following 220-residue polypeptide: Ribonuclease HII (220 aa).

The RNase H type-2 domain occupies 1-219; the sequence is MMIAGIDEAG…VENIREELKK (219 aa). 3 residues coordinate a divalent metal cation: D7, E8, and D105.

It belongs to the RNase HII family. It depends on Mn(2+) as a cofactor. Mg(2+) is required as a cofactor.

The protein localises to the cytoplasm. It catalyses the reaction Endonucleolytic cleavage to 5'-phosphomonoester.. In terms of biological role, endonuclease that specifically degrades the RNA of RNA-DNA hybrids. The chain is Ribonuclease HII from Methanosarcina mazei (strain ATCC BAA-159 / DSM 3647 / Goe1 / Go1 / JCM 11833 / OCM 88) (Methanosarcina frisia).